Reading from the N-terminus, the 465-residue chain is Opioid growth factor receptor-like protein 1 (465 aa).

Disordered stretches follow at residues Met-1–Lys-89 and Glu-309–Gly-465. Composition is skewed to basic and acidic residues over residues Arg-48–Gly-59, Pro-316–Lys-325, Thr-363–Glu-396, and Ser-426–Glu-440. Over residues Pro-442 to Gly-465 the composition is skewed to polar residues.

Belongs to the opioid growth factor receptor family.

This is Opioid growth factor receptor-like protein 1 (Ogfrl1) from Rattus norvegicus (Rat).